The following is a 613-amino-acid chain: Thioredoxin reductase 1, cytoplasmic (613 aa).

Residues 58–121 (AVLPASRPSK…LPTMNGSKDP (64 aa)) are disordered. Positions 65 to 74 (PSKTLPSSSQ) are enriched in polar residues. FAD is bound by residues 136–137 (SG), 156–157 (DF), 172–173 (TC), and 177–181 (GCIPK). Cysteines 173 and 178 form a disulfide. At Lys-182 the chain carries N6-succinyllysine. Tyr-245 bears the Phosphotyrosine mark. FAD-binding positions include 245–246 (YG) and Thr-275. NADP(+) contacts are provided by residues Arg-280, 312–318 (ASYVALE), 335–336 (RS), Arg-340, 340–342 (RGF), 406–407 (GR), and Lys-429. Tyr-314 is a binding site for FAD. FAD-binding positions include Asp-448, 455–457 (ELT), and His-586. Glu-455 serves as a coordination point for NADP(+). His-586 acts as the Proton acceptor in catalysis. The segment at residues 611–612 (CU) is a cross-link (cysteinyl-selenocysteine (Cys-Sec)). Sec-612 is a non-standard amino acid (selenocysteine).

It belongs to the class-I pyridine nucleotide-disulfide oxidoreductase family. In terms of assembly, homodimer. It depends on FAD as a cofactor. In terms of processing, ISGylated.

The protein resides in the cytoplasm. The enzyme catalyses [thioredoxin]-dithiol + NADP(+) = [thioredoxin]-disulfide + NADPH + H(+). The catalysed reaction is H2O2 + NADPH + H(+) = NADP(+) + 2 H2O. Functionally, reduces disulfideprotein thioredoxin (Trx) to its dithiol-containing form. Homodimeric flavoprotein involved in the regulation of cellular redox reactions, growth and differentiation. Contains a selenocysteine residue at the C-terminal active site that is essential for catalysis. Also has reductase activity on hydrogen peroxide (H2O2). The polypeptide is Thioredoxin reductase 1, cytoplasmic (Mus musculus (Mouse)).